A 319-amino-acid polypeptide reads, in one-letter code: MSINFIDFEQPIADIEAKIESLTSISSIDKTCDTNFNEEIKRLRDKSIELTRKIFAHLSAWQIAQLARHPCRPYMLDYVQYIFTDFDELAGDRAYADDKAIVGGLARINSRPVMIIGHQKGREIKEKIRRNFGMPAPEGYRKALRLMKMADRFSIPILTFIDTPGAYPGIGAEERGQSEAIATNLREMAYLRVPIVSTIIGEGGSGGALAIGVGDKVNMLKYSTYSVISPEGCASILWKSVDKAPLAAEAMGINAARLKKLKLIDSIIPEPLGGAHRDVAIMAASLKKQLLFDLSELDRMNEQELLDRRYNRIMKYGYC.

The CoA carboxyltransferase C-terminal domain occupies 43 to 296 (LRDKSIELTR…KKQLLFDLSE (254 aa)).

This sequence belongs to the AccA family. In terms of assembly, acetyl-CoA carboxylase is a heterohexamer composed of biotin carboxyl carrier protein (AccB), biotin carboxylase (AccC) and two subunits each of ACCase subunit alpha (AccA) and ACCase subunit beta (AccD).

It localises to the cytoplasm. It catalyses the reaction N(6)-carboxybiotinyl-L-lysyl-[protein] + acetyl-CoA = N(6)-biotinyl-L-lysyl-[protein] + malonyl-CoA. The protein operates within lipid metabolism; malonyl-CoA biosynthesis; malonyl-CoA from acetyl-CoA: step 1/1. In terms of biological role, component of the acetyl coenzyme A carboxylase (ACC) complex. First, biotin carboxylase catalyzes the carboxylation of biotin on its carrier protein (BCCP) and then the CO(2) group is transferred by the carboxyltransferase to acetyl-CoA to form malonyl-CoA. This chain is Acetyl-coenzyme A carboxylase carboxyl transferase subunit alpha, found in Baumannia cicadellinicola subsp. Homalodisca coagulata.